The primary structure comprises 73 residues: Antimicrobial peptide TsAP-2 (73 aa).

A signal peptide spans 1-22; it reads MQIKHLITIFFLVLIVADHCHA. At Lys-39 the chain carries Lysine amide. The propeptide occupies 45-73; the sequence is EITSQIEQYRNLQKREAELENLLANLPVY.

Belongs to the non-disulfide-bridged peptide (NDBP) superfamily. Short antimicrobial peptide (group 4) family. In terms of tissue distribution, expressed by the venom gland.

It localises to the secreted. Antimicrobial peptide. Has a high antibacterial activity against the Gram-positive bacterium S.aureus (MIC=5-17.30 uM), the methicillin-resistant S.aureus (MRSA) (MIC=17.30 uM), and E.faecalis (MIC=69.23 uM). Has antifungal activity against Candida spp. and one Cryptococcus neoformans strains with MICs values ranging from 6.25 to 100 uM. Also shows an inhibitory activity on C.albicans biofilms at high concentrations. Has a moderate hemolytic potency (18% at 20 uM). Also inhibits the growth of the five human cancer cell lines tested (the squamous carcinoma cell line H157 (IC(50)=4.1 uM), the lung adenocarcinoma cell line H838 (11.0 uM), the breast carcinoma cell line MCF-7 (6.4 uM), the androgen-independent prostate adenocarcinoma cell line PC3 (13.3 uM) and the glioblastoma cell line U251-MG (15.4 uM)). In the model of polymicrobial sepsis, it exhibits an antibiotic effect, reducing the levels of microorganisms in the infectious focus and the inflammatory responses in the lung and cecum of septic animals. In Tityus serrulatus (Brazilian scorpion), this protein is Antimicrobial peptide TsAP-2.